The following is a 328-amino-acid chain: DNA-directed RNA polymerase subunit alpha (328 aa).

Residues 1–230 are alpha N-terminal domain (alpha-NTD); sequence MSNHGLQMPE…DHVSFFIQLE (230 aa). The segment at 248–328 is alpha C-terminal domain (alpha-CTD); the sequence is RIRELLAQPV…EEYLEEKKAS (81 aa).

The protein belongs to the RNA polymerase alpha chain family. In terms of assembly, homodimer. The RNAP catalytic core consists of 2 alpha, 1 beta, 1 beta' and 1 omega subunit. When a sigma factor is associated with the core the holoenzyme is formed, which can initiate transcription.

It catalyses the reaction RNA(n) + a ribonucleoside 5'-triphosphate = RNA(n+1) + diphosphate. Its function is as follows. DNA-dependent RNA polymerase catalyzes the transcription of DNA into RNA using the four ribonucleoside triphosphates as substrates. The sequence is that of DNA-directed RNA polymerase subunit alpha from Salinibacter ruber (strain DSM 13855 / M31).